The primary structure comprises 325 residues: LIM and senescent cell antigen-like-containing domain protein 1 (325 aa).

Position 2 is an N-acetylalanine (A2). LIM zinc-binding domains are found at residues 10 to 62, 71 to 121, 135 to 184, 193 to 243, and 252 to 303; these read CERC…CEHD, CHQC…CRPC, CQKC…CLPC, CGAC…CETH, and CFHC…CKKC.

In terms of assembly, component of the heterotrimeric IPP (ILK-PINCH-PARVIN) complex composed of ILK, LIMS1/PINCH and PARVA; the complex binds to F-actin via the C-terminal tail of LIMS1 and the N-terminal region of PARVA, promoting F-actin filament bundling. Formation of the IPP complex is dependent on protein kinase C and precedes integrin-mediated cell adhesion and spreading. Competes with LIMS2 for interaction with ILK. Interacts (via LIM zinc-binding 5) with TGFB1I1. Interacts with SH3/SH2 adapter NCK2, thereby linking the complex to cell surface receptors. In terms of tissue distribution, expressed in most tissues except in the brain.

It is found in the cell junction. The protein localises to the focal adhesion. Its subcellular location is the cell membrane. In terms of biological role, within the IPP (ILK-PINCH-PARVIN) complex, binds to F-actin, promoting F-actin bundling, a process required to generate force for actin cytoskeleton reorganization and subsequent dynamic cell adhesion events such as cell spreading and migration. The chain is LIM and senescent cell antigen-like-containing domain protein 1 (LIMS1) from Homo sapiens (Human).